A 488-amino-acid polypeptide reads, in one-letter code: Glutamate--tRNA ligase (488 aa).

Positions 16–26 (PSPTGEPHVGT) match the 'HIGH' region motif. Residues 257-261 (KLSKR) carry the 'KMSKS' region motif. Lys260 is a binding site for ATP.

This sequence belongs to the class-I aminoacyl-tRNA synthetase family. Glutamate--tRNA ligase type 1 subfamily. As to quaternary structure, monomer.

It localises to the cytoplasm. It carries out the reaction tRNA(Glu) + L-glutamate + ATP = L-glutamyl-tRNA(Glu) + AMP + diphosphate. Its function is as follows. Catalyzes the attachment of glutamate to tRNA(Glu) in a two-step reaction: glutamate is first activated by ATP to form Glu-AMP and then transferred to the acceptor end of tRNA(Glu). In Rhizobium etli (strain ATCC 51251 / DSM 11541 / JCM 21823 / NBRC 15573 / CFN 42), this protein is Glutamate--tRNA ligase.